Reading from the N-terminus, the 515-residue chain is Maturase K (515 aa).

This sequence belongs to the intron maturase 2 family. MatK subfamily.

It is found in the plastid. It localises to the chloroplast. Functionally, usually encoded in the trnK tRNA gene intron. Probably assists in splicing its own and other chloroplast group II introns. This Pinus tabuliformis (Chinese red pine) protein is Maturase K.